A 187-amino-acid polypeptide reads, in one-letter code: Probable chemoreceptor glutamine deamidase CheD (187 aa).

The interval 164-187 (APQDVRRPTPPPMPAVASGDVDLF) is disordered.

This sequence belongs to the CheD family.

The enzyme catalyses L-glutaminyl-[protein] + H2O = L-glutamyl-[protein] + NH4(+). In terms of biological role, probably deamidates glutamine residues to glutamate on methyl-accepting chemotaxis receptors (MCPs), playing an important role in chemotaxis. The protein is Probable chemoreceptor glutamine deamidase CheD of Caulobacter vibrioides (strain ATCC 19089 / CIP 103742 / CB 15) (Caulobacter crescentus).